Reading from the N-terminus, the 311-residue chain is Pyrimidine-specific ribonucleoside hydrolase RihA (311 aa).

H240 is an active-site residue.

The protein belongs to the IUNH family. RihA subfamily.

Functionally, hydrolyzes cytidine or uridine to ribose and cytosine or uracil, respectively. The chain is Pyrimidine-specific ribonucleoside hydrolase RihA from Salmonella paratyphi A (strain ATCC 9150 / SARB42).